The chain runs to 126 residues: Cornifin alpha (126 aa).

Ser-2 carries the N-acetylserine modification. A run of 13 repeats spans residues Ser-3–Pro-14, Gln-18–Pro-29, Glu-31–Lys-38, Glu-39–Pro-46, Glu-47–Pro-54, Glu-55–Pro-62, Glu-63–Pro-70, Gln-71–Pro-78, Glu-79–Pro-86, Glu-87–Pro-94, Glu-95–Pro-102, Glu-103–Pro-110, and Gln-111–Pro-118. Residues Ser-3–Pro-29 form a 2 X 12 AA approximate repeats region. The disordered stretch occupies residues Gln-20–Pro-43. Positions Glu-31–Gln-122 are 11 X 8 AA approximate tandem repeats. The tract at residues Pro-104–Lys-126 is disordered.

The protein belongs to the cornifin (SPRR) family. Suprabasal layers of squamous-differentiated tissues such as epidermis, esophagus, tongue and trachea.

It localises to the cytoplasm. In terms of biological role, cross-linked envelope protein of keratinocytes. It is a keratinocyte protein that first appears in the cell cytosol, but ultimately becomes cross-linked to membrane proteins by transglutaminase. All that results in the formation of an insoluble envelope beneath the plasma membrane. In Oryctolagus cuniculus (Rabbit), this protein is Cornifin alpha.